Reading from the N-terminus, the 333-residue chain is Ketol-acid reductoisomerase (NADP(+)) (333 aa).

The region spanning 1-171 is the KARI N-terminal Rossmann domain; that stretch reads MSNDTQPKIA…GGARANIIKT (171 aa). NADP(+) is bound by residues 14–17, Arg37, Thr42, and 72–75; these read YGSQ and DMVQ. His97 is an active-site residue. Gly123 is an NADP(+) binding site. A KARI C-terminal knotted domain is found at 172–317; the sequence is TFKEETETDL…KKLRAKMVWL (146 aa). 4 residues coordinate Mg(2+): Asp180, Glu184, Glu216, and Glu220. Residue Ser241 coordinates substrate.

Belongs to the ketol-acid reductoisomerase family. Mg(2+) is required as a cofactor.

It carries out the reaction (2R)-2,3-dihydroxy-3-methylbutanoate + NADP(+) = (2S)-2-acetolactate + NADPH + H(+). The enzyme catalyses (2R,3R)-2,3-dihydroxy-3-methylpentanoate + NADP(+) = (S)-2-ethyl-2-hydroxy-3-oxobutanoate + NADPH + H(+). The protein operates within amino-acid biosynthesis; L-isoleucine biosynthesis; L-isoleucine from 2-oxobutanoate: step 2/4. It functions in the pathway amino-acid biosynthesis; L-valine biosynthesis; L-valine from pyruvate: step 2/4. Its function is as follows. Involved in the biosynthesis of branched-chain amino acids (BCAA). Catalyzes an alkyl-migration followed by a ketol-acid reduction of (S)-2-acetolactate (S2AL) to yield (R)-2,3-dihydroxy-isovalerate. In the isomerase reaction, S2AL is rearranged via a Mg-dependent methyl migration to produce 3-hydroxy-3-methyl-2-ketobutyrate (HMKB). In the reductase reaction, this 2-ketoacid undergoes a metal-dependent reduction by NADPH to yield (R)-2,3-dihydroxy-isovalerate. The chain is Ketol-acid reductoisomerase (NADP(+)) from Xanthomonas oryzae pv. oryzae (strain MAFF 311018).